Reading from the N-terminus, the 147-residue chain is Lysozyme C (147 aa).

The signal sequence occupies residues 1–17 (MRSLLILVLCFLPLAAP). A C-type lysozyme domain is found at 19-147 (KVYGRCELAA…VNVWIRGCRL (129 aa)). Disulfide bonds link Cys24/Cys145, Cys48/Cys133, Cys82/Cys98, and Cys94/Cys112. Catalysis depends on residues Glu53 and Asp70.

This sequence belongs to the glycosyl hydrolase 22 family. Monomer. In terms of processing, by an evolutionary shift in the site of proteolytic cleavage of prelysozyme, Gly-18 became the N-terminal residue of the mature protein instead of being the C-terminal residue of the signal sequence as in other birds.

The protein resides in the secreted. The catalysed reaction is Hydrolysis of (1-&gt;4)-beta-linkages between N-acetylmuramic acid and N-acetyl-D-glucosamine residues in a peptidoglycan and between N-acetyl-D-glucosamine residues in chitodextrins.. Functionally, lysozymes have primarily a bacteriolytic function; those in tissues and body fluids are associated with the monocyte-macrophage system and enhance the activity of immunoagents. In Phasianus colchicus colchicus (Black-necked pheasant), this protein is Lysozyme C (LYZ).